We begin with the raw amino-acid sequence, 594 residues long: Probable ABC transporter-binding protein DR_1571 (594 aa).

The first 18 residues, Met1–Ala18, serve as a signal peptide directing secretion.

Belongs to the bacterial solute-binding protein 5 family.

Probably part of a binding-protein-dependent transport system. The polypeptide is Probable ABC transporter-binding protein DR_1571 (Deinococcus radiodurans (strain ATCC 13939 / DSM 20539 / JCM 16871 / CCUG 27074 / LMG 4051 / NBRC 15346 / NCIMB 9279 / VKM B-1422 / R1)).